Consider the following 566-residue polypeptide: Alpha-N-acetylgalactosaminide alpha-2,6-sialyltransferase 1 (566 aa).

Over 1 to 16 the chain is Cytoplasmic; the sequence is MGFLIRRLPKDSRIFR. Residues 17 to 37 form a helical; Signal-anchor for type II membrane protein membrane-spanning segment; it reads WLLILTVFSFIITSFSALFGM. The Lumenal portion of the chain corresponds to 38 to 566; that stretch reads EKSIFRQLKI…ENIMKLYQRS (529 aa). N-linked (GlcNAc...) asparagine glycans are attached at residues Asn-66 and Asn-132. The tract at residues 138-161 is disordered; sequence ASVVERTKEKTTARPVPGVGEADG. Asn-192 is a glycosylation site (N-linked (GlcNAc...) asparagine). Copy 1 of the repeat occupies 247-254; it reads SSSPVSTC. The 2 X 8 AA repeats of S-S-S-X-V-S-T-C stretch occupies residues 247–337; sequence SSSPVSTCSE…ANSSSNVSTC (91 aa). 2 disulfide bridges follow: Cys-254–Cys-337 and Cys-340–Cys-508. 5 N-linked (GlcNAc...) asparagine glycosylation sites follow: Asn-275, Asn-286, Asn-306, Asn-329, and Asn-333. The stretch at 330 to 337 is repeat 2; the sequence is SSSNVSTC.

This sequence belongs to the glycosyltransferase 29 family. As to expression, heart, kidney, testes, brain, liver and lung.

It localises to the golgi apparatus membrane. It catalyses the reaction a beta-D-galactosyl-(1-&gt;3)-N-acetyl-alpha-D-galactosaminyl derivative + CMP-N-acetyl-beta-neuraminate = a beta-D-galactosyl-(1-&gt;3)-[N-acetyl-alpha-neuraminyl-(2-&gt;6)]-N-acetyl-alpha-D-galactosaminyl derivative + CMP + H(+). The catalysed reaction is a 3-O-[N-acetyl-alpha-D-galactosaminyl]-L-seryl-[protein] + CMP-N-acetyl-beta-neuraminate = a 3-O-[N-acetyl-alpha-neuraminosyl-(2-&gt;6)-N-acetyl-alpha-D-galactosaminyl]-L-seryl-[protein] + CMP + H(+). The enzyme catalyses a 3-O-[N-acetyl-alpha-D-galactosaminyl]-L-threonyl-[protein] + CMP-N-acetyl-beta-neuraminate = a 3-O-[N-acetyl-alpha-neuraminosyl-(2-&gt;6)-N-acetyl-alpha-D-galactosaminyl]-L-threonyl-[protein] + CMP + H(+). It carries out the reaction a 3-O-[beta-D-galactosyl-(1-&gt;3)-N-acetyl-alpha-D-galactosaminyl]-L-seryl-[protein] + CMP-N-acetyl-beta-neuraminate = a 3-O-{beta-D-galactosyl-(1-&gt;3)-[N-acetyl-alpha-neuraminosyl-(2-&gt;6)]-N-acetyl-alpha-D-galactosaminyl}-L-seryl-[protein] + CMP + H(+). It catalyses the reaction a 3-O-[beta-D-galactosyl-(1-&gt;3)-N-acetyl-alpha-D-galactosaminyl]-L-threonyl-[protein] + CMP-N-acetyl-beta-neuraminate = a 3-O-{beta-D-galactosyl-(1-&gt;3)-[N-acetyl-alpha-neuraminosyl-(2-&gt;6)]-N-acetyl-alpha-D-galactosaminyl}-L-threonyl-[protein] + CMP + H(+). The catalysed reaction is a 3-O-[N-acetyl-alpha-neuraminyl-(2-&gt;3)-beta-D-galactosyl-(1-&gt;3)-N-acetyl-alpha-D-galactosaminyl]-L-threonyl-[protein] + CMP-N-acetyl-beta-neuraminate = a 3-O-{alpha-Neu5Ac-(2-&gt;3)-beta-D-Gal-(1-&gt;3)-[alpha-Neu5Ac-(2-&gt;6)]-alpha-D-GalNAc}-L-threonyl-[protein] + CMP + H(+). It functions in the pathway protein modification; protein glycosylation. Protein sialyltransferase specifically expressed in goblet cells that plays a key role in intestinal host-commensal homeostasis. Conjugates sialic acid with an alpha-2-6 linkage to N-acetylgalactosamine (GalNAc) glycan chains linked to serine or threonine in glycoproteins. Generates sialylated T and Tn antigens.. This Gallus gallus (Chicken) protein is Alpha-N-acetylgalactosaminide alpha-2,6-sialyltransferase 1 (ST6GALNAC1).